A 476-amino-acid polypeptide reads, in one-letter code: Aspartyl/glutamyl-tRNA(Asn/Gln) amidotransferase subunit B (476 aa).

Belongs to the GatB/GatE family. GatB subfamily. In terms of assembly, heterotrimer of A, B and C subunits.

It carries out the reaction L-glutamyl-tRNA(Gln) + L-glutamine + ATP + H2O = L-glutaminyl-tRNA(Gln) + L-glutamate + ADP + phosphate + H(+). It catalyses the reaction L-aspartyl-tRNA(Asn) + L-glutamine + ATP + H2O = L-asparaginyl-tRNA(Asn) + L-glutamate + ADP + phosphate + 2 H(+). In terms of biological role, allows the formation of correctly charged Asn-tRNA(Asn) or Gln-tRNA(Gln) through the transamidation of misacylated Asp-tRNA(Asn) or Glu-tRNA(Gln) in organisms which lack either or both of asparaginyl-tRNA or glutaminyl-tRNA synthetases. The reaction takes place in the presence of glutamine and ATP through an activated phospho-Asp-tRNA(Asn) or phospho-Glu-tRNA(Gln). This is Aspartyl/glutamyl-tRNA(Asn/Gln) amidotransferase subunit B from Solidesulfovibrio magneticus (strain ATCC 700980 / DSM 13731 / RS-1) (Desulfovibrio magneticus).